Consider the following 242-residue polypeptide: MFIAYLTAGAPDLNTTKQALLNLANDGADVIEIGVPYSDPLADGMILQKASQQALKNRFRLEQLWHLLAEIELPVPVVILAYYNQIFHYGVEKWVTTLVNLKVKALIVPDLPYEEAAILRAACARHHLHMIWLISPTTPKVRAKQLALACDDWIYLVSRTGVTGVDAHFDNQIPNMIAELKQVTTTPIALGFGIHQKQQLQLVKSWGADGVIIGTACMQILLEKGVDQLTEWISAMKKSSYP.

Active-site proton acceptor residues include Glu32 and Asp43.

The protein belongs to the TrpA family. As to quaternary structure, tetramer of two alpha and two beta chains.

It localises to the plastid. It is found in the chloroplast. It catalyses the reaction (1S,2R)-1-C-(indol-3-yl)glycerol 3-phosphate + L-serine = D-glyceraldehyde 3-phosphate + L-tryptophan + H2O. Its pathway is amino-acid biosynthesis; L-tryptophan biosynthesis; L-tryptophan from chorismate: step 5/5. Its function is as follows. The alpha subunit is responsible for the aldol cleavage of indoleglycerol phosphate to indole and glyceraldehyde 3-phosphate. The chain is Tryptophan synthase alpha chain from Cyanidium caldarium (Red alga).